Consider the following 472-residue polypeptide: Replicative helicase loading/DNA remodeling protein DnaB (472 aa).

Residues 1 to 112 (MADYWKDVLP…ERLFIYELLP (112 aa)) are DDBH1. Residues 210 to 302 (DLFLAGLSET…VHLREGEQPA (93 aa)) are DDBH2-1. Residues 303–411 (EEDSLDGKLI…RQYLEWAEGK (109 aa)) form a DDBH2-2 region. Positions 415-472 (SKRNQKVIREEKLPDWMTEKETASDSESGQQKLHPQDLEEQKKKMMEEMQKLKKYSAY) are disordered. Composition is skewed to basic and acidic residues over residues 421–437 (VIREEKLPDWMTEKETA) and 448–465 (HPQDLEEQKKKMMEEMQK).

It belongs to the DnaB/DnaD family. In terms of assembly, homotetramer. Also forms higher-order oligomers, can be induced by some ssDNA. The DNA replisome assembles sequentially on oriC in this order; DnaA, DnaD, DnaB, DnaI-DnaC helicase. In atomic force microscopy forms a square with a small central hole. Part of the replication restart primosome which assembles in this order; PriA, DnaD then DnaB. The preferred DNA substrate mimics an arrested DNA replication fork with unreplicated lagging strand. Interacts with DnaC, but probably not as a tetramer. Interacts with DnaD but no interaction with PriA was seen. Interacts with cell cycle regulator CcrZ. Post-translationally, in early growth phase only full-length protein is detected, during late growth and stationary phase full-length and C-terminally truncated proteins are seen (at protein level). Truncated protein is only seen in cytoplasmic fractions.

It is found in the cytoplasm. It localises to the cell membrane. Its function is as follows. Helps DnaI load the DnaC replicative helicase onto single-stranded (ss)DNA. During DNA replication from the origin of replication (oriC) in the DNA replisome, DnaD is required after DnaA, before DnaB and before subsequent helicase DnaC loading. Component of the replication restart primosome, which reloads the replicative helicase on sites other than oriC. DnaB, DnaD and DnaI may also be required for a PriA-independent pathway of replication fork restart. DnaB and DnaD work together to allow DnaB access to ssDNA. DNA replication at oriC might originate on the inner face of the cell membrane; DnaB is essential for both replication initiation and cell membrane attachment of the origin region of the chromosome and plasmids. Weakly binds ssDNA, preferentially binds double-stranded (ds)DNA, and replication fork-like substrates. Remodels DNA, laterally compacts supercoiled plasmid and linear DNA, forms beads along the dsDNA. Together DnaB and DnaD form bipolar complexes on plasmid DNA. DnaB and DnaD are also required to load helicase on the repN plasmid origin of replication (oriN). This is Replicative helicase loading/DNA remodeling protein DnaB from Bacillus subtilis (strain 168).